Reading from the N-terminus, the 160-residue chain is Peripheral myelin protein 22 (160 aa).

A topological domain (cytoplasmic) is located at residue Met1. Residues Leu2–Gly31 form a helical membrane-spanning segment. At Asn32 to Ser64 the chain is on the extracellular side. N-linked (GlcNAc...) asparagine glycosylation occurs at Asn41. A helical membrane pass occupies residues Val65–Thr91. Residues Lys92–Arg95 lie on the Cytoplasmic side of the membrane. The chain crosses the membrane as a helical span at residues Phe96 to Val119. Residues Arg120–Gly133 are Extracellular-facing. A helical membrane pass occupies residues Phe134–Leu156. Residues Arg157 to Glu160 lie on the Cytoplasmic side of the membrane.

This sequence belongs to the PMP-22/EMP/MP20 family. Post-translationally, ubiquitinated by the DCX(DCAF13) E3 ubiquitin ligase complex, leading to its degradation. In terms of tissue distribution, found exclusively in the peripheral nervous system. Present in both myelinating and nonmyelinating Schwann cells. Found in the tumors of Schwann cell lineage where axons are present (neurofibromas) but not where axons are absent (schwannomas).

It localises to the cell membrane. Functionally, might be involved in growth regulation, and in myelinization in the peripheral nervous system. The chain is Peripheral myelin protein 22 (Pmp22) from Rattus norvegicus (Rat).